The primary structure comprises 394 residues: MWGSQHRSFQVALWFLVLAVFLLVGFLHVDFRLLIPDKVQEPPVTNIMFLKTHKTASSTILNILYRFSESHNLSTALPEGSRVHLGYPWFFVTRYVEGLKQDAHLQHHFNIMCNHLRFNYPEVQKVMPRDTFYFSILRNPVFQLESSFIYYKDYAPAFQRAKSLDEFLADPWKYYNASVSLKNVYAKNNMWFDFGFDNNAPADMDYVRKRLAEVEQRFHLVLIADYFDESMVLLRRRLRWQLDDVVSFKLNVRSQSTVSHLTPESQERVQHWCALDWQLYQHFNRTFWTQLHAELSPRQLTEEVEQLRERQRELMALCLQDPEPKNLTHIDDQNLRPYQGGKANILGYNLRHGLDTTTLHICQRMAMPELQHMAHMYSLQFPDKTPKDIPFLKK.

Residues 1-8 (MWGSQHRS) are Cytoplasmic-facing. A helical; Signal-anchor for type II membrane protein transmembrane segment spans residues 9 to 29 (FQVALWFLVLAVFLLVGFLHV). The Lumenal segment spans residues 30 to 394 (DFRLLIPDKV…TPKDIPFLKK (365 aa)). N-linked (GlcNAc...) asparagine glycans are attached at residues asparagine 72, asparagine 176, asparagine 284, and asparagine 326.

It belongs to the galactose-3-O-sulfotransferase family.

The protein resides in the golgi apparatus. Its subcellular location is the golgi stack membrane. The protein operates within protein modification; carbohydrate sulfation. With respect to regulation, strongly inhibited by Cu(2+) and Zn(2+). Its function is as follows. Transfers a sulfate group to the hydroxyl group at C3 of non-reducing beta-galactosyl residues. Acts both on type 1 (Gal-beta-1,3-GlcNAc) and type 2 (Gal-beta-1,4-GlcNAc) chains with similar efficiency. In Mus musculus (Mouse), this protein is Galactose-3-O-sulfotransferase 2 (Gal3st2).